The primary structure comprises 621 residues: Glutamine--fructose-6-phosphate aminotransferase [isomerizing] (621 aa).

The Nucleophile; for GATase activity role is filled by C2. The region spanning 2–223 (CGIIGYVGEG…DRELGIISIS (222 aa)) is the Glutamine amidotransferase type-2 domain. 2 consecutive SIS domains span residues 289 to 436 (LHLE…HKFT) and 470 to 611 (LSKQ…IDKP). K616 functions as the For Fru-6P isomerization activity in the catalytic mechanism.

In terms of assembly, homodimer.

It localises to the plastid. It is found in the chloroplast. It carries out the reaction D-fructose 6-phosphate + L-glutamine = D-glucosamine 6-phosphate + L-glutamate. Catalyzes the first step in hexosamine metabolism, converting fructose-6P into glucosamine-6P using glutamine as a nitrogen source. This is Glutamine--fructose-6-phosphate aminotransferase [isomerizing] from Cyanidium caldarium (Red alga).